A 215-amino-acid polypeptide reads, in one-letter code: Putative glycosyltransferase ALG1L2 (215 aa).

The interval 40-66 is disordered; sequence PFRARSEPEDPDTERSAFTERDSGSGL. Residues 43–62 show a composition bias toward basic and acidic residues; sequence ARSEPEDPDTERSAFTERDS.

Belongs to the glycosyltransferase group 1 family.

Functionally, putative glycosyltransferase. The chain is Putative glycosyltransferase ALG1L2 (ALG1L2) from Homo sapiens (Human).